Consider the following 240-residue polypeptide: Expansin-A20 (240 aa).

The first 21 residues, 1–21 (MGNILLQLLAVVALCIAPARS), serve as a signal peptide directing secretion. Positions 41 to 145 (GGACGYGNLY…QQVKCWRYGG (105 aa)) constitute an Expansin-like EG45 domain. Residues Asn107 and Asn207 are each glycosylated (N-linked (GlcNAc...) asparagine). Residues 155 to 234 (YFELVLVTNM…GWSFGQTFST (80 aa)) enclose the Expansin-like CBD domain.

Belongs to the expansin family. Expansin A subfamily.

The protein localises to the secreted. It localises to the cell wall. Its subcellular location is the membrane. Functionally, may cause loosening and extension of plant cell walls by disrupting non-covalent bonding between cellulose microfibrils and matrix glucans. No enzymatic activity has been found. May be required for rapid internodal elongation in deepwater rice during submergence. The protein is Expansin-A20 (EXPA20) of Oryza sativa subsp. japonica (Rice).